A 160-amino-acid polypeptide reads, in one-letter code: Transcription antitermination protein NusB (160 aa).

The protein belongs to the NusB family.

In terms of biological role, involved in transcription antitermination. Required for transcription of ribosomal RNA (rRNA) genes. Binds specifically to the boxA antiterminator sequence of the ribosomal RNA (rrn) operons. The chain is Transcription antitermination protein NusB from Rhizobium etli (strain CIAT 652).